Here is a 723-residue protein sequence, read N- to C-terminus: Preterminal protein (723 aa).

Residues 453–462 carry the Nuclear localization signal motif; that stretch reads RLPMRRRRRR. The segment at 457 to 492 is disordered; that stretch reads RRRRRRAPPPPPMSEELSEPEVEAFPPASPPRRSFE. Ser651 is subject to O-(5'-phospho-DNA)-serine.

Belongs to the adenoviridae terminal protein family. Heterodimer with the polymerase; this heterodimer binds to bp 9 to 18 of the genome. Interacts with host POU2F1; POU2F1 binds to the auxiliary sequences in the inverted terminal repeats and tethers the pTP-POL heterodimer to the origin DNA thereby participating in the assembly of the pre-initiation complex (POL-TP-DBP-NFIA-POU2F1). Post-translationally, preterminal protein is used to replicate viral genome, upon genomic encapsidation it is processed first into iTP and finally into TP by adenovirus protease.

It localises to the host nucleus matrix. Protein covalently bound to the viral DNA that acts as a primer for viral genomic replication by DNA strand displacement. Assembles on the viral origin of replication in an initiation complex with viral polymerase, DBP, host NFIA and host POU2F1/OCT1. During initiation, the polymerase covalently couples the first dCTP with Ser-580 of pTP. The terminal protein stimulates the template activity over 20 fold compared to protein-free templates. Neo-synthesized viral genomes are linked to two preterminal proteins, one for each 5' end. These new genomes are encapsidated in the nucleus, and during capsid maturation by viral protease, preterminal protein is first cleaved into intermediary (iTP), then into mature TP. May play a role in host nuclear matrix localization of genomic DNA. This Canis lupus familiaris (Dog) protein is Preterminal protein.